A 66-amino-acid polypeptide reads, in one-letter code: Large ribosomal subunit protein bL35 (66 aa).

The protein belongs to the bacterial ribosomal protein bL35 family.

The protein is Large ribosomal subunit protein bL35 of Caulobacter vibrioides (strain ATCC 19089 / CIP 103742 / CB 15) (Caulobacter crescentus).